Reading from the N-terminus, the 236-residue chain is Baculoviral IAP repeat-containing protein 8 (236 aa).

Residues 7–70 (RLITFGTWMY…KWYPGCKYLL (64 aa)) form a BIR repeat. 4 residues coordinate Zn(2+): Cys-39, Cys-42, His-59, and Cys-66. Residues 189–224 (CKICMDRHIAVVFIPCGHLVTCKQCAEAVDRCPMCS) form an RING-type zinc finger.

The protein belongs to the IAP family. In terms of assembly, binds to caspase-9. Testis specific in normal tissues.

The protein localises to the cytoplasm. Protects against apoptosis mediated by BAX. The protein is Baculoviral IAP repeat-containing protein 8 (BIRC8) of Homo sapiens (Human).